A 99-amino-acid polypeptide reads, in one-letter code: ATP-dependent Clp protease adapter protein ClpS (99 aa).

It belongs to the ClpS family. As to quaternary structure, binds to the N-terminal domain of the chaperone ClpA.

Functionally, involved in the modulation of the specificity of the ClpAP-mediated ATP-dependent protein degradation. This is ATP-dependent Clp protease adapter protein ClpS from Acetivibrio thermocellus (strain ATCC 27405 / DSM 1237 / JCM 9322 / NBRC 103400 / NCIMB 10682 / NRRL B-4536 / VPI 7372) (Clostridium thermocellum).